We begin with the raw amino-acid sequence, 684 residues long: DNA-directed RNA polymerase subunit beta' (684 aa).

Zn(2+)-binding residues include C69, C71, C87, and C90. Residues D489, D491, and D493 each contribute to the Mg(2+) site.

It belongs to the RNA polymerase beta' chain family. RpoC1 subfamily. In terms of assembly, in plastids the minimal PEP RNA polymerase catalytic core is composed of four subunits: alpha, beta, beta', and beta''. When a (nuclear-encoded) sigma factor is associated with the core the holoenzyme is formed, which can initiate transcription. Requires Mg(2+) as cofactor. Zn(2+) is required as a cofactor.

It localises to the plastid. It is found in the chloroplast. It carries out the reaction RNA(n) + a ribonucleoside 5'-triphosphate = RNA(n+1) + diphosphate. Functionally, DNA-dependent RNA polymerase catalyzes the transcription of DNA into RNA using the four ribonucleoside triphosphates as substrates. The protein is DNA-directed RNA polymerase subunit beta' of Morus indica (Mulberry).